A 118-amino-acid chain; its full sequence is Ribonuclease P protein component (118 aa).

Belongs to the RnpA family. As to quaternary structure, consists of a catalytic RNA component (M1 or rnpB) and a protein subunit.

It carries out the reaction Endonucleolytic cleavage of RNA, removing 5'-extranucleotides from tRNA precursor.. Its function is as follows. RNaseP catalyzes the removal of the 5'-leader sequence from pre-tRNA to produce the mature 5'-terminus. It can also cleave other RNA substrates such as 4.5S RNA. The protein component plays an auxiliary but essential role in vivo by binding to the 5'-leader sequence and broadening the substrate specificity of the ribozyme. The protein is Ribonuclease P protein component of Shewanella sp. (strain ANA-3).